Reading from the N-terminus, the 423-residue chain is Diaminobutyrate--2-oxoglutarate transaminase (423 aa).

Lysine 267 carries the N6-(pyridoxal phosphate)lysine modification.

This sequence belongs to the class-III pyridoxal-phosphate-dependent aminotransferase family. Homohexamer. Pyridoxal 5'-phosphate is required as a cofactor.

The catalysed reaction is L-2,4-diaminobutanoate + 2-oxoglutarate = L-aspartate 4-semialdehyde + L-glutamate. It functions in the pathway amine and polyamine biosynthesis; ectoine biosynthesis; L-ectoine from L-aspartate 4-semialdehyde: step 1/3. In terms of biological role, catalyzes reversively the conversion of L-aspartate beta-semialdehyde (ASA) to L-2,4-diaminobutyrate (DABA) by transamination with L-glutamate. The sequence is that of Diaminobutyrate--2-oxoglutarate transaminase (ectB) from Chromohalobacter salexigens (strain ATCC BAA-138 / DSM 3043 / CIP 106854 / NCIMB 13768 / 1H11).